A 372-amino-acid polypeptide reads, in one-letter code: GDP-mannose 4,6-dehydratase (372 aa).

NADP(+)-binding positions include 9 to 14, 64 to 65, 86 to 90, and Tyr-101; these read GVTGQD, DL, and LGAQS. Residue Thr-133 is part of the active site. Catalysis depends on nucleophile residues Glu-135 and Tyr-157. Residues Lys-161, His-187, and Arg-192 each contribute to the NADP(+) site.

Belongs to the NAD(P)-dependent epimerase/dehydratase family. GDP-mannose 4,6-dehydratase subfamily. The cofactor is NADP(+).

It carries out the reaction GDP-alpha-D-mannose = GDP-4-dehydro-alpha-D-rhamnose + H2O. Its pathway is nucleotide-sugar biosynthesis; GDP-L-fucose biosynthesis via de novo pathway; GDP-L-fucose from GDP-alpha-D-mannose: step 1/2. In terms of biological role, catalyzes the conversion of GDP-D-mannose to GDP-4-dehydro-6-deoxy-D-mannose. The sequence is that of GDP-mannose 4,6-dehydratase from Vibrio cholerae.